A 138-amino-acid polypeptide reads, in one-letter code: Ribosome-binding factor A (138 aa).

The interval 117-138 (ERQNKPAASTEKPPVGSLDADL) is disordered.

The protein belongs to the RbfA family. In terms of assembly, monomer. Binds 30S ribosomal subunits, but not 50S ribosomal subunits or 70S ribosomes.

The protein resides in the cytoplasm. Functionally, one of several proteins that assist in the late maturation steps of the functional core of the 30S ribosomal subunit. Associates with free 30S ribosomal subunits (but not with 30S subunits that are part of 70S ribosomes or polysomes). Required for efficient processing of 16S rRNA. May interact with the 5'-terminal helix region of 16S rRNA. This Acaryochloris marina (strain MBIC 11017) protein is Ribosome-binding factor A.